We begin with the raw amino-acid sequence, 520 residues long: Nucleolar protein 12 (520 aa).

2 disordered regions span residues 1–29 and 41–185; these read MGKK…NVSV and AGPV…DDDE. Positions 78 to 95 are enriched in acidic residues; the sequence is ASEDQFMEDAPESPDAAE. Residues 120–132 are compositionally biased toward basic and acidic residues; it reads SYMRRLAKEEQKE. Residues 144-168 are compositionally biased toward acidic residues; the sequence is LEEESEDGEKESPQSEDGESEDEGA. 2 consecutive RRM domains span residues 191 to 303 and 311 to 421; these read RTVF…NVAH and RCVF…RAKK. Residues 472-520 form a disordered region; that stretch reads EGNRATADGSSRIRVRTKSRGSKAKKDSRSKKRAAAYKAAGGKKAKIGK. The segment covering 484-520 has biased composition (basic residues); that stretch reads IRVRTKSRGSKAKKDSRSKKRAAAYKAAGGKKAKIGK.

Belongs to the RRM RBM34 family.

It is found in the nucleus. The protein localises to the nucleolus. In terms of biological role, involved in pre-25S rRNA processing. The sequence is that of Nucleolar protein 12 (nop12) from Emericella nidulans (strain FGSC A4 / ATCC 38163 / CBS 112.46 / NRRL 194 / M139) (Aspergillus nidulans).